A 215-amino-acid polypeptide reads, in one-letter code: Orotidine 5'-phosphate decarboxylase (215 aa).

Residues D12, K34, 60–69 (DFKVADIPNT), S117, 170–180 (PGVGAQGGSAA), G193, and R194 contribute to the substrate site. Catalysis depends on K62, which acts as the Proton donor.

The protein belongs to the OMP decarboxylase family. Type 1 subfamily. As to quaternary structure, homodimer.

It catalyses the reaction orotidine 5'-phosphate + H(+) = UMP + CO2. Its pathway is pyrimidine metabolism; UMP biosynthesis via de novo pathway; UMP from orotate: step 2/2. In terms of biological role, catalyzes the decarboxylation of orotidine 5'-monophosphate (OMP) to uridine 5'-monophosphate (UMP). The polypeptide is Orotidine 5'-phosphate decarboxylase (Methanococcoides burtonii (strain DSM 6242 / NBRC 107633 / OCM 468 / ACE-M)).